The chain runs to 318 residues: Lipoyl synthase (318 aa).

Positions 64, 69, 75, 90, 94, 97, and 304 each coordinate [4Fe-4S] cluster. The region spanning 76-293 is the Radical SAM core domain; the sequence is FSGGTATFMI…AEEGYKMGFK (218 aa).

It belongs to the radical SAM superfamily. Lipoyl synthase family. Requires [4Fe-4S] cluster as cofactor.

Its subcellular location is the cytoplasm. It carries out the reaction [[Fe-S] cluster scaffold protein carrying a second [4Fe-4S](2+) cluster] + N(6)-octanoyl-L-lysyl-[protein] + 2 oxidized [2Fe-2S]-[ferredoxin] + 2 S-adenosyl-L-methionine + 4 H(+) = [[Fe-S] cluster scaffold protein] + N(6)-[(R)-dihydrolipoyl]-L-lysyl-[protein] + 4 Fe(3+) + 2 hydrogen sulfide + 2 5'-deoxyadenosine + 2 L-methionine + 2 reduced [2Fe-2S]-[ferredoxin]. It participates in protein modification; protein lipoylation via endogenous pathway; protein N(6)-(lipoyl)lysine from octanoyl-[acyl-carrier-protein]: step 2/2. Catalyzes the radical-mediated insertion of two sulfur atoms into the C-6 and C-8 positions of the octanoyl moiety bound to the lipoyl domains of lipoate-dependent enzymes, thereby converting the octanoylated domains into lipoylated derivatives. This chain is Lipoyl synthase, found in Pseudomonas syringae pv. tomato (strain ATCC BAA-871 / DC3000).